The following is a 508-amino-acid chain: UDP-N-acetylmuramoyl-L-alanyl-D-glutamate--2,6-diaminopimelate ligase (508 aa).

UDP-N-acetyl-alpha-D-muramoyl-L-alanyl-D-glutamate is bound at residue serine 33. Residue 121 to 127 coordinates ATP; the sequence is GTNGKST. Residues asparagine 162, 163–164, serine 190, glutamine 196, and arginine 198 each bind UDP-N-acetyl-alpha-D-muramoyl-L-alanyl-D-glutamate; that span reads TT. Lysine 230 carries the N6-carboxylysine modification. Meso-2,6-diaminopimelate contacts are provided by residues arginine 399, 423-426, glycine 474, and glutamate 478; that span reads DNPR. Residues 423–426 carry the Meso-diaminopimelate recognition motif motif; the sequence is DNPR.

This sequence belongs to the MurCDEF family. MurE subfamily. It depends on Mg(2+) as a cofactor. Post-translationally, carboxylation is probably crucial for Mg(2+) binding and, consequently, for the gamma-phosphate positioning of ATP.

It localises to the cytoplasm. The catalysed reaction is UDP-N-acetyl-alpha-D-muramoyl-L-alanyl-D-glutamate + meso-2,6-diaminopimelate + ATP = UDP-N-acetyl-alpha-D-muramoyl-L-alanyl-gamma-D-glutamyl-meso-2,6-diaminopimelate + ADP + phosphate + H(+). It functions in the pathway cell wall biogenesis; peptidoglycan biosynthesis. Its function is as follows. Catalyzes the addition of meso-diaminopimelic acid to the nucleotide precursor UDP-N-acetylmuramoyl-L-alanyl-D-glutamate (UMAG) in the biosynthesis of bacterial cell-wall peptidoglycan. In Buchnera aphidicola subsp. Baizongia pistaciae (strain Bp), this protein is UDP-N-acetylmuramoyl-L-alanyl-D-glutamate--2,6-diaminopimelate ligase.